Consider the following 631-residue polypeptide: Pescadillo homolog (631 aa).

A BRCT domain is found at 321-414 (RLRTLFKGLK…QLLPTNDYFL (94 aa)). The span at 428–442 (SKRDSYIPPEEKALH) shows a compositional bias: basic and acidic residues. Disordered stretches follow at residues 428–471 (SKRD…EADQ) and 489–560 (YKKY…EVDE). Phosphoserine occurs at positions 453 and 457. Composition is skewed to acidic residues over residues 453 to 471 (SEEE…EADQ) and 498 to 525 (VNED…EDVD). Residues 526–538 (EQTKRKQQEKEKM) show a composition bias toward basic and acidic residues. The segment covering 544 to 553 (KVHKVNKRQV) has biased composition (basic residues). A coiled-coil region spans residues 593–629 (LRKKRRNIDADTKEAKKAAKREARKLAAEAAARAAKL).

This sequence belongs to the pescadillo family.

The protein resides in the nucleus. The protein localises to the nucleolus. It localises to the nucleoplasm. Its function is as follows. Required for maturation of ribosomal RNAs and formation of the large ribosomal subunit. The chain is Pescadillo homolog from Drosophila persimilis (Fruit fly).